The following is a 151-amino-acid chain: Ribosome maturation factor RimP (151 aa).

It belongs to the RimP family.

The protein localises to the cytoplasm. In terms of biological role, required for maturation of 30S ribosomal subunits. This Colwellia psychrerythraea (strain 34H / ATCC BAA-681) (Vibrio psychroerythus) protein is Ribosome maturation factor RimP.